Consider the following 358-residue polypeptide: Photosystem II protein D1 2 (358 aa).

3 helical membrane-spanning segments follow: residues 28 to 45, 117 to 132, and 141 to 155; these read YVGW…AATI, HFLI…QWEL, and WICV…AAMA. His-117 contributes to the chlorophyll a binding site. Tyr-125 serves as a coordination point for pheophytin a. Asp-169 and Glu-188 together coordinate [CaMn4O5] cluster. Residues 196-217 form a helical membrane-spanning segment; it reads FHMLGVAGVFGGSLFSAMHGSL. His-197 serves as a coordination point for chlorophyll a. Residues His-214 and 263-264 contribute to the a quinone site; that span reads SF. Position 214 (His-214) interacts with Fe cation. Position 271 (His-271) interacts with Fe cation. Residues 273–287 form a helical membrane-spanning segment; that stretch reads FLGAWPVVGIWFTSM. Residues His-331, Glu-332, Asp-341, and Ala-343 each contribute to the [CaMn4O5] cluster site. Positions 344-358 are excised as a propeptide; it reads AAESTPVALQAPAIG.

Belongs to the reaction center PufL/M/PsbA/D family. As to quaternary structure, PSII is composed of 1 copy each of membrane proteins PsbA, PsbB, PsbC, PsbD, PsbE, PsbF, PsbH, PsbI, PsbJ, PsbK, PsbL, PsbM, PsbT, PsbX, PsbY, PsbZ, Psb30/Ycf12, peripheral proteins PsbO, CyanoQ (PsbQ), PsbU, PsbV and a large number of cofactors. It forms dimeric complexes. It depends on The D1/D2 heterodimer binds P680, chlorophylls that are the primary electron donor of PSII, and subsequent electron acceptors. It shares a non-heme iron and each subunit binds pheophytin, quinone, additional chlorophylls, carotenoids and lipids. D1 provides most of the ligands for the Mn4-Ca-O5 cluster of the oxygen-evolving complex (OEC). There is also a Cl(-1) ion associated with D1 and D2, which is required for oxygen evolution. The PSII complex binds additional chlorophylls, carotenoids and specific lipids. as a cofactor. Tyr-160 forms a radical intermediate that is referred to as redox-active TyrZ, YZ or Y-Z. In terms of processing, C-terminally processed by CtpA; processing is essential to allow assembly of the oxygen-evolving complex and thus photosynthetic growth.

The protein localises to the cellular thylakoid membrane. It catalyses the reaction 2 a plastoquinone + 4 hnu + 2 H2O = 2 a plastoquinol + O2. In terms of biological role, photosystem II (PSII) is a light-driven water:plastoquinone oxidoreductase that uses light energy to abstract electrons from H(2)O, generating O(2) and a proton gradient subsequently used for ATP formation. It consists of a core antenna complex that captures photons, and an electron transfer chain that converts photonic excitation into a charge separation. The D1/D2 (PsbA/PsbD) reaction center heterodimer binds P680, the primary electron donor of PSII as well as several subsequent electron acceptors. In Synechococcus sp. (strain CC9605), this protein is Photosystem II protein D1 2.